A 171-amino-acid polypeptide reads, in one-letter code: S-ribosylhomocysteine lyase (171 aa).

Fe cation-binding residues include His54, His58, and Cys128.

Belongs to the LuxS family. As to quaternary structure, homodimer. It depends on Fe cation as a cofactor.

The enzyme catalyses S-(5-deoxy-D-ribos-5-yl)-L-homocysteine = (S)-4,5-dihydroxypentane-2,3-dione + L-homocysteine. Its function is as follows. Involved in the synthesis of autoinducer 2 (AI-2) which is secreted by bacteria and is used to communicate both the cell density and the metabolic potential of the environment. The regulation of gene expression in response to changes in cell density is called quorum sensing. Catalyzes the transformation of S-ribosylhomocysteine (RHC) to homocysteine (HC) and 4,5-dihydroxy-2,3-pentadione (DPD). The chain is S-ribosylhomocysteine lyase from Pectobacterium atrosepticum (strain SCRI 1043 / ATCC BAA-672) (Erwinia carotovora subsp. atroseptica).